The following is a 158-amino-acid chain: NAD(P)H-quinone oxidoreductase subunit N (158 aa).

It belongs to the complex I NdhN subunit family. NDH-1 can be composed of about 15 different subunits; different subcomplexes with different compositions have been identified which probably have different functions.

The protein resides in the cellular thylakoid membrane. It catalyses the reaction a plastoquinone + NADH + (n+1) H(+)(in) = a plastoquinol + NAD(+) + n H(+)(out). It carries out the reaction a plastoquinone + NADPH + (n+1) H(+)(in) = a plastoquinol + NADP(+) + n H(+)(out). NDH-1 shuttles electrons from an unknown electron donor, via FMN and iron-sulfur (Fe-S) centers, to quinones in the respiratory and/or the photosynthetic chain. The immediate electron acceptor for the enzyme in this species is believed to be plastoquinone. Couples the redox reaction to proton translocation, and thus conserves the redox energy in a proton gradient. Cyanobacterial NDH-1 also plays a role in inorganic carbon-concentration. The polypeptide is NAD(P)H-quinone oxidoreductase subunit N (Crocosphaera subtropica (strain ATCC 51142 / BH68) (Cyanothece sp. (strain ATCC 51142))).